The chain runs to 304 residues: ADP-ribosyl cyclase/cyclic ADP-ribose hydrolase 1 (304 aa).

At 1–21 (MANYEFSQVSGDRPGCRLSRK) the chain is on the cytoplasmic side. A helical; Signal-anchor for type II membrane protein membrane pass occupies residues 22–44 (AQIGLGVGLLVLIALVVGIVVIL). Over 45–304 (LRPRSLLVWT…PEHPSCRLNT (260 aa)) the chain is Extracellular. 3 disulfide bridges follow: Cys-70/Cys-86, Cys-103/Cys-184, and Cys-164/Cys-177. The N-linked (GlcNAc...) asparagine glycan is linked to Asn-104. Cys-123 is an active-site residue. Asn-124 is a glycosylation site (N-linked (GlcNAc...) asparagine). Cys-205 is a catalytic residue. N-linked (GlcNAc...) asparagine glycans are attached at residues Asn-213 and Asn-223. Cystine bridges form between Cys-258-Cys-279 and Cys-291-Cys-300.

Belongs to the ADP-ribosyl cyclase family. Homodimer.

The protein resides in the membrane. The enzyme catalyses NAD(+) = cyclic ADP-beta-D-ribose + nicotinamide + H(+). The catalysed reaction is nicotinate + NADP(+) = nicotinate-adenine dinucleotide phosphate + nicotinamide. It carries out the reaction NAD(+) + H2O = ADP-D-ribose + nicotinamide + H(+). Functionally, synthesizes the second messengers cyclic ADP-ribose (cADPR) and nicotinate-adenine dinucleotide phosphate (NAADP), the former a second messenger for glucose-induced insulin secretion, the latter a Ca(2+) mobilizer. Also has cADPR hydrolase activity. The polypeptide is ADP-ribosyl cyclase/cyclic ADP-ribose hydrolase 1 (Cd38) (Mus musculus (Mouse)).